The following is a 64-amino-acid chain: Large ribosomal subunit protein bL35 (64 aa).

It belongs to the bacterial ribosomal protein bL35 family.

The chain is Large ribosomal subunit protein bL35 from Wolinella succinogenes (strain ATCC 29543 / DSM 1740 / CCUG 13145 / JCM 31913 / LMG 7466 / NCTC 11488 / FDC 602W) (Vibrio succinogenes).